A 172-amino-acid polypeptide reads, in one-letter code: Xanthine-guanine phosphoribosyltransferase (172 aa).

5-phospho-alpha-D-ribose 1-diphosphate-binding positions include 47-48 (RG) and 106-114 (DDLVDTGKT). Aspartate 107 serves as a coordination point for Mg(2+). Residues aspartate 110 and isoleucine 153 each coordinate guanine. Xanthine contacts are provided by aspartate 110 and isoleucine 153. GMP-binding positions include 110–114 (DTGKT) and 152–153 (WI).

It belongs to the purine/pyrimidine phosphoribosyltransferase family. XGPT subfamily. In terms of assembly, homotetramer. Mg(2+) serves as cofactor.

Its subcellular location is the cell inner membrane. The enzyme catalyses GMP + diphosphate = guanine + 5-phospho-alpha-D-ribose 1-diphosphate. The catalysed reaction is XMP + diphosphate = xanthine + 5-phospho-alpha-D-ribose 1-diphosphate. It carries out the reaction IMP + diphosphate = hypoxanthine + 5-phospho-alpha-D-ribose 1-diphosphate. It functions in the pathway purine metabolism; GMP biosynthesis via salvage pathway; GMP from guanine: step 1/1. It participates in purine metabolism; XMP biosynthesis via salvage pathway; XMP from xanthine: step 1/1. In terms of biological role, purine salvage pathway enzyme that catalyzes the transfer of the ribosyl-5-phosphate group from 5-phospho-alpha-D-ribose 1-diphosphate (PRPP) to the N9 position of the 6-oxopurines guanine and xanthine to form the corresponding ribonucleotides GMP (guanosine 5'-monophosphate) and XMP (xanthosine 5'-monophosphate), with the release of PPi. To a lesser extent, also acts on hypoxanthine. In Rhodopseudomonas palustris (strain HaA2), this protein is Xanthine-guanine phosphoribosyltransferase.